Reading from the N-terminus, the 260-residue chain is MGYSKRFALYISILILIVMVAGCGKSDETKEDSKEEQIKKSFAKTLDMYPIKNLEDLYDKEGYRDGEFKKGDKGTWVLYSAIVSQPKGESLKSRGMILKLDRNKRTAKGSYIIRELKEDKNHDVQKNEKKYPVKLVNNRIVLVKDVKDKKLKNEIESFELFSQYGNFNHFDRNEITNISYNPNAPNYSAEYKMKKNDRNIQQLKKRFNLKTSKTPKLLFKGSGDIKGSSVGYKEIEIIFSRSKEEAFIMLTALSSFQVTK.

The first 22 residues, 1–22 (MGYSKRFALYISILILIVMVAG), serve as a signal peptide directing secretion. Cys23 is lipidated: N-palmitoyl cysteine. A lipid anchor (S-diacylglycerol cysteine) is attached at Cys23.

It belongs to the staphylococcal tandem lipoprotein family.

The protein localises to the cell membrane. This is an uncharacterized protein from Staphylococcus aureus (strain N315).